Reading from the N-terminus, the 21-residue chain is Tertiapin (21 aa).

Disulfide bonds link Cys-3-Cys-14 and Cys-5-Cys-18.

In terms of processing, oxidation of Met-13 results in the loss of biological activity. An amidation at Lys-21 is suggested in Ref.1. Expressed by the venom gland.

It is found in the secreted. In terms of biological role, presynaptic neurotoxin that blocks the inwardly rectifying Kir1.1/KCNJ1 and Kir3.1/3.4 (KCNJ3/KCNJ5) potassium channels with high affinity by binding to the M1-M2 linker region of these channels in a 1:1 stoichiometry. It may block the potassium channel pore by occluding its alpha helix into the channel vestibule. Tertiapin-Q also inhibits calcium-activated large conductance BK-type (KCNMA) potassium channels in a concentration-, and voltage-dependent manner, in addition to inhibiting Kir3.1/3.2 (KCNJ3/KCNJ6) heteromultimers potassium channels. It can prevent dose-dependently acetylcholine(ACh)-induced atrioventricular blocks in mammalian hearts, as KCNJ3/KCNJ5 channels (also named I(KACh), because these channels are activated by ACh) are found in mammalian myocytes. Interacts specifically with calmodulin in the presence of calcium. This Apis mellifera (Honeybee) protein is Tertiapin.